The sequence spans 139 residues: Actin-depolymerizing factor 9 (139 aa).

Residues 7 to 139 form the ADF-H domain; the sequence is GLAVNDECKF…SLDIIRARAH (133 aa).

It belongs to the actin-binding proteins ADF family.

Its function is as follows. Actin-depolymerizing protein. Severs actin filaments (F-actin) and binds to actin monomers. The chain is Actin-depolymerizing factor 9 (ADF9) from Oryza sativa subsp. japonica (Rice).